The chain runs to 163 residues: Ribonuclease P protein component 4 (163 aa).

Zn(2+) is bound by residues Cys66, Cys69, Cys96, and Cys99. The interval 110-163 is disordered; sequence GPRGGAPISPPAAEYGSGGRDSGEREDKGPQGPPRQGGRDNRQGGGHQGGPKGD. Residues 152 to 163 show a composition bias toward gly residues; sequence QGGGHQGGPKGD.

This sequence belongs to the eukaryotic/archaeal RNase P protein component 4 family. In terms of assembly, consists of a catalytic RNA component and at least 4-5 protein subunits. Zn(2+) serves as cofactor.

The protein resides in the cytoplasm. The catalysed reaction is Endonucleolytic cleavage of RNA, removing 5'-extranucleotides from tRNA precursor.. In terms of biological role, part of ribonuclease P, a protein complex that generates mature tRNA molecules by cleaving their 5'-ends. In Aeropyrum pernix (strain ATCC 700893 / DSM 11879 / JCM 9820 / NBRC 100138 / K1), this protein is Ribonuclease P protein component 4.